Here is a 417-residue protein sequence, read N- to C-terminus: Gamma-glutamyl phosphate reductase (417 aa).

It belongs to the gamma-glutamyl phosphate reductase family.

It is found in the cytoplasm. The enzyme catalyses L-glutamate 5-semialdehyde + phosphate + NADP(+) = L-glutamyl 5-phosphate + NADPH + H(+). It participates in amino-acid biosynthesis; L-proline biosynthesis; L-glutamate 5-semialdehyde from L-glutamate: step 2/2. Its function is as follows. Catalyzes the NADPH-dependent reduction of L-glutamate 5-phosphate into L-glutamate 5-semialdehyde and phosphate. The product spontaneously undergoes cyclization to form 1-pyrroline-5-carboxylate. This chain is Gamma-glutamyl phosphate reductase, found in Legionella pneumophila (strain Corby).